Consider the following 385-residue polypeptide: S-adenosylmethionine synthase (385 aa).

His16 serves as a coordination point for ATP. Residue Asp18 coordinates Mg(2+). Glu44 provides a ligand contact to K(+). L-methionine contacts are provided by Glu57 and Gln100. Residues Gln100–Lys110 form a flexible loop region. ATP is bound by residues Asp165–Lys167, Arg231–Phe232, Asp240, Arg246–Lys247, Ala263, and Lys267. Asp240 contributes to the L-methionine binding site. Residue Lys271 coordinates L-methionine.

Belongs to the AdoMet synthase family. In terms of assembly, homotetramer; dimer of dimers. Mg(2+) serves as cofactor. Requires K(+) as cofactor.

It is found in the cytoplasm. It carries out the reaction L-methionine + ATP + H2O = S-adenosyl-L-methionine + phosphate + diphosphate. It participates in amino-acid biosynthesis; S-adenosyl-L-methionine biosynthesis; S-adenosyl-L-methionine from L-methionine: step 1/1. In terms of biological role, catalyzes the formation of S-adenosylmethionine (AdoMet) from methionine and ATP. The overall synthetic reaction is composed of two sequential steps, AdoMet formation and the subsequent tripolyphosphate hydrolysis which occurs prior to release of AdoMet from the enzyme. This chain is S-adenosylmethionine synthase, found in Vibrio cholerae serotype O1 (strain ATCC 39315 / El Tor Inaba N16961).